A 144-amino-acid polypeptide reads, in one-letter code: Large ribosomal subunit protein uL13 (144 aa).

The protein belongs to the universal ribosomal protein uL13 family. In terms of assembly, part of the 50S ribosomal subunit.

Functionally, this protein is one of the early assembly proteins of the 50S ribosomal subunit, although it is not seen to bind rRNA by itself. It is important during the early stages of 50S assembly. This Clostridium acetobutylicum (strain ATCC 824 / DSM 792 / JCM 1419 / IAM 19013 / LMG 5710 / NBRC 13948 / NRRL B-527 / VKM B-1787 / 2291 / W) protein is Large ribosomal subunit protein uL13.